Here is a 505-residue protein sequence, read N- to C-terminus: GDP-Man:Man(3)GlcNAc(2)-PP-Dol alpha-1,2-mannosyltransferase (505 aa).

Topologically, residues 1 to 4 are lumenal; the sequence is MSTM. The chain crosses the membrane as a helical span at residues 5–25; sequence LWVVVAAVLLFVLPVVRVPML. The Cytoplasmic segment spans residues 26-130; sequence DLTRRNIIRW…KWVDGSTWKH (105 aa). An intramembrane region (helical) is located at residues 131-151; that stretch reads LTLVGQAMGSMLLTIEALLRF. Residues 152-374 are Cytoplasmic-facing; that stretch reads VPDIWLDTMG…FGINAMWNEH (223 aa). The segment at residues 375 to 395 is an intramembrane region (helical); it reads FGIAVVEYAAAGLISLVHASA. Topologically, residues 396–505 are cytoplasmic; the sequence is GPLLDIIVPW…EHKTSRLGSN (110 aa).

The protein belongs to the glycosyltransferase group 1 family.

The protein localises to the endoplasmic reticulum membrane. It catalyses the reaction an alpha-D-Man-(1-&gt;3)-[alpha-D-Man-(1-&gt;6)]-beta-D-Man-(1-&gt;4)-beta-D-GlcNAc-(1-&gt;4)-alpha-D-GlcNAc-diphospho-di-trans,poly-cis-dolichol + 2 GDP-alpha-D-mannose = an alpha-D-Man-(1-&gt;2)-alpha-D-Man-(1-&gt;2)-alpha-D-Man-(1-&gt;3)-[alpha-D-Man-(1-&gt;6)]-beta-D-Man-(1-&gt;4)-beta-D-GlcNAc-(1-&gt;4)-alpha-D-GlcNAc-diphospho-di-trans,poly-cis-dolichol + 2 GDP + 2 H(+). The protein operates within protein modification; protein glycosylation. Functionally, GDP-Man:Man(3)GlcNAc(2)-PP-Dol alpha-1,2-mannosyltransferase that operates in the biosynthetic pathway of dolichol-linked oligosaccharides, the glycan precursors employed in protein asparagine (N)-glycosylation. The assembly of dolichol-linked oligosaccharides begins on the cytosolic side of the endoplasmic reticulum membrane and finishes in its lumen. The sequential addition of sugars to dolichol pyrophosphate produces dolichol-linked oligosaccharides containing fourteen sugars, including two GlcNAcs, nine mannoses and three glucoses. Once assembled, the oligosaccharide is transferred from the lipid to nascent proteins by oligosaccharyltransferases. Catalyzes, on the cytoplasmic face of the endoplasmic reticulum, the addition of the fourth and fifth mannose residues to the dolichol-linked oligosaccharide chain, to produce Man(5)GlcNAc(2)-PP-dolichol core oligosaccharide. The polypeptide is GDP-Man:Man(3)GlcNAc(2)-PP-Dol alpha-1,2-mannosyltransferase (ALG11) (Candida glabrata (strain ATCC 2001 / BCRC 20586 / JCM 3761 / NBRC 0622 / NRRL Y-65 / CBS 138) (Yeast)).